Here is a 394-residue protein sequence, read N- to C-terminus: Succinate--CoA ligase [ADP-forming] subunit beta 1 (394 aa).

Residues arginine 9–alanine 237 enclose the ATP-grasp domain. ATP-binding positions include lysine 45, glycine 52–glycine 54, glutamate 92, proline 95, and glutamate 100. 2 residues coordinate Mg(2+): asparagine 192 and aspartate 206. Residues asparagine 257 and glycine 319–threonine 321 contribute to the substrate site.

This sequence belongs to the succinate/malate CoA ligase beta subunit family. As to quaternary structure, heterotetramer of two alpha and two beta subunits. Mg(2+) is required as a cofactor.

It carries out the reaction succinate + ATP + CoA = succinyl-CoA + ADP + phosphate. It catalyses the reaction GTP + succinate + CoA = succinyl-CoA + GDP + phosphate. Its pathway is carbohydrate metabolism; tricarboxylic acid cycle; succinate from succinyl-CoA (ligase route): step 1/1. Its function is as follows. Succinyl-CoA synthetase functions in the citric acid cycle (TCA), coupling the hydrolysis of succinyl-CoA to the synthesis of either ATP or GTP and thus represents the only step of substrate-level phosphorylation in the TCA. The beta subunit provides nucleotide specificity of the enzyme and binds the substrate succinate, while the binding sites for coenzyme A and phosphate are found in the alpha subunit. The chain is Succinate--CoA ligase [ADP-forming] subunit beta 1 from Streptomyces coelicolor (strain ATCC BAA-471 / A3(2) / M145).